We begin with the raw amino-acid sequence, 660 residues long: Bifunctional polymyxin resistance protein ArnA (660 aa).

Residues 1–304 (MKTVVFAYHD…MLGLVQGSRL (304 aa)) are formyltransferase ArnAFT. 86-88 (HLI) lines the (6R)-10-formyltetrahydrofolate pocket. The active-site Proton donor; for formyltransferase activity is His104. Residues Arg114 and 136–140 (VKRAD) each bind (6R)-10-formyltetrahydrofolate. Positions 314 to 660 (RRTRVLILGV…RTVDLTDKPS (347 aa)) are dehydrogenase ArnADH. NAD(+) contacts are provided by residues Asp347 and 368–369 (DI). UDP-alpha-D-glucuronate-binding positions include Ala393, Tyr398, and 432-433 (TS). Residue Glu434 is the Proton acceptor; for decarboxylase activity of the active site. UDP-alpha-D-glucuronate is bound by residues Arg460, Asn492, 526-535 (KLIDGGKQKR), and Tyr613. The active-site Proton donor; for decarboxylase activity is the Arg619.

The protein in the N-terminal section; belongs to the Fmt family. UDP-L-Ara4N formyltransferase subfamily. This sequence in the C-terminal section; belongs to the NAD(P)-dependent epimerase/dehydratase family. UDP-glucuronic acid decarboxylase subfamily. As to quaternary structure, homohexamer, formed by a dimer of trimers.

It catalyses the reaction UDP-alpha-D-glucuronate + NAD(+) = UDP-beta-L-threo-pentopyranos-4-ulose + CO2 + NADH. The enzyme catalyses UDP-4-amino-4-deoxy-beta-L-arabinose + (6R)-10-formyltetrahydrofolate = UDP-4-deoxy-4-formamido-beta-L-arabinose + (6S)-5,6,7,8-tetrahydrofolate + H(+). It functions in the pathway nucleotide-sugar biosynthesis; UDP-4-deoxy-4-formamido-beta-L-arabinose biosynthesis; UDP-4-deoxy-4-formamido-beta-L-arabinose from UDP-alpha-D-glucuronate: step 1/3. It participates in nucleotide-sugar biosynthesis; UDP-4-deoxy-4-formamido-beta-L-arabinose biosynthesis; UDP-4-deoxy-4-formamido-beta-L-arabinose from UDP-alpha-D-glucuronate: step 3/3. Its pathway is bacterial outer membrane biogenesis; lipopolysaccharide biosynthesis. Bifunctional enzyme that catalyzes the oxidative decarboxylation of UDP-glucuronic acid (UDP-GlcUA) to UDP-4-keto-arabinose (UDP-Ara4O) and the addition of a formyl group to UDP-4-amino-4-deoxy-L-arabinose (UDP-L-Ara4N) to form UDP-L-4-formamido-arabinose (UDP-L-Ara4FN). The modified arabinose is attached to lipid A and is required for resistance to polymyxin and cationic antimicrobial peptides. The polypeptide is Bifunctional polymyxin resistance protein ArnA (Shigella flexneri).